Consider the following 214-residue polypeptide: Transcription factor MYB24 (214 aa).

HTH myb-type domains follow at residues 14–66 (DAEV…LNYL) and 67–121 (RPDV…QKYI). 2 DNA-binding regions (H-T-H motif) span residues 42–66 (WNSL…LNYL) and 94–117 (WSKI…RTKI).

Interacts (via N-terminus) with TIFY10A/JAZ1, TIFY5A/JAZ8 AND TIFY3A/JAZ11. Expressed specifically in flowers. Expressed in all four whorls of the flower and in the vascular tissue of stamen filament and sepals. Detected in male and female gametophytes, especially in microspores and ovules. Weakly expressed in petals and the upper part of pistils.

The protein resides in the nucleus. Transcription factor acting redundantly with MYB21 and MYB57 to control stamen filament elongation in the late developed flowers. Contributes with MYB21 to induction of MYB108 by jasmonate. Repressed at the transcript levels by DELLA proteins. In Arabidopsis thaliana (Mouse-ear cress), this protein is Transcription factor MYB24 (MYB24).